Reading from the N-terminus, the 279-residue chain is Energy-coupling factor transporter ATP-binding protein EcfA1 (279 aa).

The 235-residue stretch at 6–240 (LSIEGVSFRY…GSKLERIGLD (235 aa)) folds into the ABC transporter domain. Residue 40 to 47 (GHNGSGKS) participates in ATP binding.

It belongs to the ABC transporter superfamily. Energy-coupling factor EcfA family. In terms of assembly, forms a stable energy-coupling factor (ECF) transporter complex composed of 2 membrane-embedded substrate-binding proteins (S component), 2 ATP-binding proteins (A component) and 2 transmembrane proteins (T component).

The protein localises to the cell membrane. Functionally, ATP-binding (A) component of a common energy-coupling factor (ECF) ABC-transporter complex. Unlike classic ABC transporters this ECF transporter provides the energy necessary to transport a number of different substrates. The chain is Energy-coupling factor transporter ATP-binding protein EcfA1 from Geobacillus kaustophilus (strain HTA426).